Consider the following 201-residue polypeptide: FMN-dependent NADH:quinone oxidoreductase (201 aa).

Residues Ser10, 16 to 18 (SQS), 96 to 99 (MYNF), and 140 to 143 (SRGG) contribute to the FMN site.

This sequence belongs to the azoreductase type 1 family. As to quaternary structure, homodimer. FMN serves as cofactor.

It carries out the reaction 2 a quinone + NADH + H(+) = 2 a 1,4-benzosemiquinone + NAD(+). It catalyses the reaction N,N-dimethyl-1,4-phenylenediamine + anthranilate + 2 NAD(+) = 2-(4-dimethylaminophenyl)diazenylbenzoate + 2 NADH + 2 H(+). In terms of biological role, quinone reductase that provides resistance to thiol-specific stress caused by electrophilic quinones. Also exhibits azoreductase activity. Catalyzes the reductive cleavage of the azo bond in aromatic azo compounds to the corresponding amines. This chain is FMN-dependent NADH:quinone oxidoreductase, found in Shigella flexneri serotype 5b (strain 8401).